The chain runs to 429 residues: Nocturnin (429 aa).

A mitochondrion-targeting transit peptide spans 1-73; sequence MYQSPRRLCS…SMGNGTSRLY (73 aa). The disordered stretch occupies residues 21-68; it reads RRTLVPGPRRTLAPPVLGSRPKSPQLQAAAASGAARSRPRTVSSMGNG. Glu193 is a Mg(2+) binding site. Substrate is bound by residues Glu193, 217–219, Asn261, 284–287, and 322–324; these read KPW, HLKA, and DFN. Positions 341 to 351 are interaction with PPARG; the sequence is NLNSAYKLLSP. A substrate-binding site is contributed by His412.

This sequence belongs to the CCR4/nocturin family. Interacts with PPARG. Mg(2+) serves as cofactor. Highly expressed in the differentiated adipocyte (at protein level). Ubiquitous.

The protein localises to the cytoplasm. It localises to the nucleus. Its subcellular location is the perinuclear region. The protein resides in the mitochondrion. It catalyses the reaction NADP(+) + H2O = phosphate + NAD(+). The catalysed reaction is NADPH + H2O = phosphate + NADH. Functionally, phosphatase which catalyzes the conversion of NADP(+) to NAD(+) and of NADPH to NADH. Shows a small preference for NADPH over NADP(+). Represses translation and promotes degradation of target mRNA molecules. Plays an important role in post-transcriptional regulation of metabolic genes under circadian control. Exerts a rhythmic post-transcriptional control of genes necessary for metabolic functions including nutrient absorption, glucose/insulin sensitivity, lipid metabolism, adipogenesis, inflammation and osteogenesis. Plays an important role in favoring adipogenesis over osteoblastogenesis and acts as a key regulator of the adipogenesis/osteogenesis balance. Promotes adipogenesis by facilitating PPARG nuclear translocation which activates its transcriptional activity. Regulates circadian expression of NOS2 in the liver and negatively regulates the circadian expression of IGF1 in the bone. Critical for proper development of early embryos. In Mus musculus (Mouse), this protein is Nocturnin.